Reading from the N-terminus, the 342-residue chain is Phosphate acyltransferase (342 aa).

Belongs to the PlsX family. In terms of assembly, homodimer. Probably interacts with PlsY.

Its subcellular location is the cytoplasm. It carries out the reaction a fatty acyl-[ACP] + phosphate = an acyl phosphate + holo-[ACP]. The protein operates within lipid metabolism; phospholipid metabolism. Functionally, catalyzes the reversible formation of acyl-phosphate (acyl-PO(4)) from acyl-[acyl-carrier-protein] (acyl-ACP). This enzyme utilizes acyl-ACP as fatty acyl donor, but not acyl-CoA. The polypeptide is Phosphate acyltransferase (Legionella pneumophila (strain Paris)).